The chain runs to 258 residues: Ribonuclease HII (258 aa).

Positions 1–20 (MRVAPSGGPPHHHAMIRATP) are disordered. Over residues 10–20 (PHHHAMIRATP) the composition is skewed to basic residues. Positions 48 to 236 (WPVAGCDEVG…VVAARERHRA (189 aa)) constitute an RNase H type-2 domain. A divalent metal cation is bound by residues Asp54, Glu55, and Asp145.

The protein belongs to the RNase HII family. It depends on Mn(2+) as a cofactor. Requires Mg(2+) as cofactor.

It is found in the cytoplasm. It carries out the reaction Endonucleolytic cleavage to 5'-phosphomonoester.. In terms of biological role, endonuclease that specifically degrades the RNA of RNA-DNA hybrids. In Nitrobacter winogradskyi (strain ATCC 25391 / DSM 10237 / CIP 104748 / NCIMB 11846 / Nb-255), this protein is Ribonuclease HII.